Reading from the N-terminus, the 200-residue chain is Ribosome maturation factor RimM (200 aa).

Positions K103–L181 constitute a PRC barrel domain.

Belongs to the RimM family. Binds ribosomal protein uS19.

The protein resides in the cytoplasm. Its function is as follows. An accessory protein needed during the final step in the assembly of 30S ribosomal subunit, possibly for assembly of the head region. Essential for efficient processing of 16S rRNA. May be needed both before and after RbfA during the maturation of 16S rRNA. It has affinity for free ribosomal 30S subunits but not for 70S ribosomes. This chain is Ribosome maturation factor RimM, found in Kosmotoga olearia (strain ATCC BAA-1733 / DSM 21960 / TBF 19.5.1).